The following is a 690-amino-acid chain: eEF1A lysine and N-terminal methyltransferase (690 aa).

A disordered region spans residues 427–451; it reads AAASSASKKKNKKKAKQPASTGAKD. The segment covering 433–442 has biased composition (basic residues); sequence SKKKNKKKAK.

It belongs to the methyltransferase superfamily.

The catalysed reaction is L-lysyl-[protein] + S-adenosyl-L-methionine = N(6)-methyl-L-lysyl-[protein] + S-adenosyl-L-homocysteine + H(+). The enzyme catalyses N(6)-methyl-L-lysyl-[protein] + S-adenosyl-L-methionine = N(6),N(6)-dimethyl-L-lysyl-[protein] + S-adenosyl-L-homocysteine + H(+). It catalyses the reaction N-terminal glycyl-L-lysyl-L-glutamyl-[protein] + 3 S-adenosyl-L-methionine = N-terminal N,N,N-trimethyl-glycyl-L-lysyl-L-glutamyl-[protein] + 3 S-adenosyl-L-homocysteine + 3 H(+). Functionally, dual methyltransferase that catalyzes methylation of elongation factor 1-alpha (eef1a1 and eef1a2) at two different positions, and is therefore involved in the regulation of mRNA translation. Via its C-terminus, methylates the N-terminus of eef1a1 and eef1a2. Via its N-terminus dimethylates lysine residues of eef1a1 and eef1a2. In Danio rerio (Zebrafish), this protein is eEF1A lysine and N-terminal methyltransferase (mettl13).